A 425-amino-acid chain; its full sequence is Putative E3 ubiquitin-protein ligase UBR7 (425 aa).

A UBR-type zinc finger spans residues 44–116 (EKCSYSQGSV…KNLECKLFPD (73 aa)). The segment at 132-188 (GLYCVCKRPYPDPEDEVPDEMIQCVVCEDWFHGRHLGAIPPESGDFQEMVCQACMRR) adopts a PHD-type; atypical zinc-finger fold. Residues 212–269 (LPNATGMGDEDVSKPENGAPQDNGLKEDAPEHGRDSVNEVKAEQKNEPCSSSSSESDL) form a disordered region. Residues K225 and K252 each participate in a glycyl lysine isopeptide (Lys-Gly) (interchain with G-Cter in SUMO2) cross-link. Positions 235–257 (GLKEDAPEHGRDSVNEVKAEQKN) are enriched in basic and acidic residues. Position 264 is a phosphoserine (S264). Glycyl lysine isopeptide (Lys-Gly) (interchain with G-Cter in SUMO2) cross-links involve residues K274 and K398.

In terms of tissue distribution, expressed in testis and sperm (at protein level).

It carries out the reaction S-ubiquitinyl-[E2 ubiquitin-conjugating enzyme]-L-cysteine + [acceptor protein]-L-lysine = [E2 ubiquitin-conjugating enzyme]-L-cysteine + N(6)-ubiquitinyl-[acceptor protein]-L-lysine.. The protein operates within protein modification; protein ubiquitination. In terms of biological role, E3 ubiquitin-protein ligase which is a component of the N-end rule pathway. Recognizes and binds to proteins bearing specific N-terminal residues that are destabilizing according to the N-end rule, leading to their ubiquitination and subsequent degradation. This is Putative E3 ubiquitin-protein ligase UBR7 (Ubr7) from Mus musculus (Mouse).